The chain runs to 215 residues: Ribose-5-phosphate isomerase A (215 aa).

Residues 26–29 (TGST), 79–82 (DGAD), and 92–95 (KGGG) contribute to the substrate site. Residue Glu101 is the Proton acceptor of the active site. Lys119 serves as a coordination point for substrate.

This sequence belongs to the ribose 5-phosphate isomerase family. As to quaternary structure, homodimer.

The enzyme catalyses aldehydo-D-ribose 5-phosphate = D-ribulose 5-phosphate. Its pathway is carbohydrate degradation; pentose phosphate pathway; D-ribose 5-phosphate from D-ribulose 5-phosphate (non-oxidative stage): step 1/1. Its function is as follows. Catalyzes the reversible conversion of ribose-5-phosphate to ribulose 5-phosphate. The protein is Ribose-5-phosphate isomerase A of Xanthomonas campestris pv. campestris (strain 8004).